We begin with the raw amino-acid sequence, 393 residues long: Protein TsgA (393 aa).

The next 12 helical transmembrane spans lie at 11–31 (WISF…GMVM), 51–71 (FLNA…EIVP), 78–98 (FGFI…SLAL), 101–121 (AAMF…TFLI), 134–154 (LLFT…VAAF), 162–182 (WYWV…LTFG), 206–226 (IGVL…LGFI), 245–265 (ALVS…SFIL), 273–293 (ILTV…TGTQ), 298–318 (WFIL…ITLG), 332–352 (FILT…GPIV), and 361–381 (LLTA…LGFV).

The protein belongs to the major facilitator superfamily. TsgA family.

The protein resides in the cell inner membrane. In Salmonella gallinarum (strain 287/91 / NCTC 13346), this protein is Protein TsgA.